Consider the following 321-residue polypeptide: MESSFTQKDMLAQVNQLWSMLDDMAENSPESYQKFIQRHMKEGKEFMTPPEPNLCIHTKILEPDEKILFINICQWNRVPAPMSEAHPVPISAGQLENLSDGTVVAIAYNPEVLKRAHQDHVELDQLIRLAMKYIEEQYQITLCHSYHVAPFQLKGNAKMMKESLERIQKQPATNKGNSSCATDNSLLEELKSIALIREKQETSPSICITREDAPKSTKTKLIEEISSTDLQNRDLLPSPWHELSVTKDNAGHPQSLILKVKLRGVHSVAECDLSVSKDDLLLVVPGRYRLLLNLPQAVNEETVAAKFNKANYILLVTMPTL.

It belongs to the PIH1 family.

This is PIH1 domain-containing protein 2 (pih1d2) from Xenopus tropicalis (Western clawed frog).